The chain runs to 702 residues: Protein-glucosylgalactosylhydroxylysine glucosidase (702 aa).

Position 310 to 311 (310 to 311) interacts with substrate; sequence WD. The active-site Proton donor is the Glu-440. Substrate is bound at residue 508-509; the sequence is KQ.

This sequence belongs to the glycosyl hydrolase 65 family.

It catalyses the reaction (5R)-5-O-[alpha-D-glucosyl-(1-&gt;2)-beta-D-galactosyl]-5-hydroxy-L-lysyl-[collagen] + H2O = (5R)-5-O-(beta-D-galactosyl)-5-hydroxy-L-lysyl-[collagen] + D-glucose. Its function is as follows. Catalyzes the hydrolysis of glucose from the disaccharide unit linked to hydroxylysine residues of collagen and collagen-like proteins. The sequence is that of Protein-glucosylgalactosylhydroxylysine glucosidase from Gallus gallus (Chicken).